The sequence spans 689 residues: Glycine--tRNA ligase beta subunit (689 aa).

Belongs to the class-II aminoacyl-tRNA synthetase family. Tetramer of two alpha and two beta subunits.

Its subcellular location is the cytoplasm. It catalyses the reaction tRNA(Gly) + glycine + ATP = glycyl-tRNA(Gly) + AMP + diphosphate. The chain is Glycine--tRNA ligase beta subunit from Salmonella choleraesuis (strain SC-B67).